The following is a 355-amino-acid chain: Phosphoribosylformylglycinamidine cyclo-ligase (355 aa).

The protein belongs to the AIR synthase family.

The protein resides in the cytoplasm. The enzyme catalyses 2-formamido-N(1)-(5-O-phospho-beta-D-ribosyl)acetamidine + ATP = 5-amino-1-(5-phospho-beta-D-ribosyl)imidazole + ADP + phosphate + H(+). The protein operates within purine metabolism; IMP biosynthesis via de novo pathway; 5-amino-1-(5-phospho-D-ribosyl)imidazole from N(2)-formyl-N(1)-(5-phospho-D-ribosyl)glycinamide: step 2/2. In Beijerinckia indica subsp. indica (strain ATCC 9039 / DSM 1715 / NCIMB 8712), this protein is Phosphoribosylformylglycinamidine cyclo-ligase.